A 234-amino-acid polypeptide reads, in one-letter code: MLSDGVEITSRSGGRFGAYLGKPTTDSAPIVVIAQEIFGITPFIRETVEWLVGAGFGCVCPDLYWRQAPNIELDANVPSEREQALALFRDFDMEAGVNDLSCAIEYARALPFSNGRVAVVGYCLGGALAFDVAARSLADCSIGYYGVGLEKKVSLVPAITRPAMFHMGTKDHYVTEEARSILEEHFGRNKNLSLHWYPVGHSFARSSSPNFDQAATTVANARTLELLAMLKDPS.

Residues C123, D171, and H201 contribute to the active site.

This sequence belongs to the dienelactone hydrolase family. Monomer.

It catalyses the reaction 2-(5-oxo-2,5-dihydrofuran-2-ylidene)acetate + H2O = 4-oxohex-2-enedioate + H(+). The protein operates within aromatic compound metabolism; 3-chlorocatechol degradation. Its function is as follows. Ring cleavage of cyclic ester dienelactone to produce maleylacetate. The chain is Carboxymethylenebutenolidase 1 (tfdEI) from Cupriavidus pinatubonensis (strain JMP 134 / LMG 1197) (Cupriavidus necator (strain JMP 134)).